The chain runs to 38 residues: Large ribosomal subunit protein bL36 (38 aa).

It belongs to the bacterial ribosomal protein bL36 family.

The chain is Large ribosomal subunit protein bL36 from Chlorobium phaeobacteroides (strain BS1).